We begin with the raw amino-acid sequence, 418 residues long: Actin-related protein 3B (418 aa).

This sequence belongs to the actin family. ARP3 subfamily. In terms of assembly, interacts with the Arp2/3 complex composed of ARP2, ARP3, ARPC1B, ARPC1B/p41-ARC, ARPC2/p34-ARC, ARPC3/p21-ARC, ARPC4/p20-ARC and ARPC5/p16-ARC.

It is found in the cytoplasm. The protein localises to the cytoskeleton. Its subcellular location is the cell projection. Its function is as follows. Plays a role in the organization of the actin cytoskeleton. May function as ATP-binding component of the Arp2/3 complex which is involved in regulation of actin polymerization and together with an activating nucleation-promoting factor (NPF) mediates the formation of branched actin networks. May decrease the metastatic potential of tumors. The chain is Actin-related protein 3B (Actr3b) from Mus musculus (Mouse).